A 306-amino-acid polypeptide reads, in one-letter code: Polyphosphate kinase PPK2B (306 aa).

This sequence belongs to the polyphosphate kinase 2 (PPK2) family. Class I subfamily. Homotetramer. Mn(2+) serves as cofactor.

The catalysed reaction is [phosphate](n) + ATP = [phosphate](n+1) + ADP. It catalyses the reaction [phosphate](n) + GTP = [phosphate](n+1) + GDP. In terms of biological role, catalyzes the synthesis of polyP from ATP or GTP. Can also use inorganic polyphosphate (polyP) as a donor to convert ADP to ATP, but the activity is 10-fold higher in vitro for polyP synthesis than for ATP formation. This chain is Polyphosphate kinase PPK2B, found in Corynebacterium glutamicum (strain ATCC 13032 / DSM 20300 / JCM 1318 / BCRC 11384 / CCUG 27702 / LMG 3730 / NBRC 12168 / NCIMB 10025 / NRRL B-2784 / 534).